A 328-amino-acid polypeptide reads, in one-letter code: GMP reductase (328 aa).

The active-site Thioimidate intermediate is cysteine 176. 205–228 (IIADGGIRTHGDVAKSIRFGATMV) contributes to the NADP(+) binding site.

The protein belongs to the IMPDH/GMPR family. GuaC type 2 subfamily.

The enzyme catalyses IMP + NH4(+) + NADP(+) = GMP + NADPH + 2 H(+). In terms of biological role, catalyzes the irreversible NADPH-dependent deamination of GMP to IMP. It functions in the conversion of nucleobase, nucleoside and nucleotide derivatives of G to A nucleotides, and in maintaining the intracellular balance of A and G nucleotides. This chain is GMP reductase, found in Bacillus thuringiensis (strain Al Hakam).